A 301-amino-acid polypeptide reads, in one-letter code: Small ribosomal subunit biogenesis GTPase RsgA (301 aa).

The CP-type G domain occupies 63–224 (INALVRPPIA…IADTPGFSSY (162 aa)). GTP is bound by residues 112-115 (SKAD) and 167-175 (GQTGAGKST). Zn(2+) contacts are provided by Cys248, Cys253, His255, and Cys261.

The protein belongs to the TRAFAC class YlqF/YawG GTPase family. RsgA subfamily. In terms of assembly, monomer. Associates with 30S ribosomal subunit, binds 16S rRNA. Zn(2+) serves as cofactor.

It localises to the cytoplasm. Its function is as follows. One of several proteins that assist in the late maturation steps of the functional core of the 30S ribosomal subunit. Helps release RbfA from mature subunits. May play a role in the assembly of ribosomal proteins into the subunit. Circularly permuted GTPase that catalyzes slow GTP hydrolysis, GTPase activity is stimulated by the 30S ribosomal subunit. The chain is Small ribosomal subunit biogenesis GTPase RsgA from Leuconostoc citreum (strain KM20).